The following is a 142-amino-acid chain: Large ribosomal subunit protein uL13 (142 aa).

Belongs to the universal ribosomal protein uL13 family. Part of the 50S ribosomal subunit.

This protein is one of the early assembly proteins of the 50S ribosomal subunit, although it is not seen to bind rRNA by itself. It is important during the early stages of 50S assembly. In Shewanella oneidensis (strain ATCC 700550 / JCM 31522 / CIP 106686 / LMG 19005 / NCIMB 14063 / MR-1), this protein is Large ribosomal subunit protein uL13.